The chain runs to 139 residues: Transcription antitermination protein NusB (139 aa).

This sequence belongs to the NusB family.

Functionally, involved in transcription antitermination. Required for transcription of ribosomal RNA (rRNA) genes. Binds specifically to the boxA antiterminator sequence of the ribosomal RNA (rrn) operons. In Erwinia tasmaniensis (strain DSM 17950 / CFBP 7177 / CIP 109463 / NCPPB 4357 / Et1/99), this protein is Transcription antitermination protein NusB.